A 309-amino-acid chain; its full sequence is MSEMPKVRGRLTQARPLSDLTWLRVGGPADWLFQPADVEDLSDFLARLPEEVAVFPMGVGSNLIVRDGGLRCVVIRLGRGFNQIDISGTRVVAGAAALDAHVARKAADAGLDLTFLRTIPGSIGGAVRMNAGCYGSYTADVLVEVQVVSRTGEVTTLAARDLQLGYRHSTLAEGAVLTKAVFEAPRGDPETLHARMTDQLARRDATQPTKERSAGSTFRNPAGFSSTGRSDDVHDLKAWKVIDDAGMRGARRGGAQMSEMHSNFMVNTGRATAADLEGLGEEVRKKVYDSSGITLEWEIMRVGEKLSSD.

Positions 24–187 constitute an FAD-binding PCMH-type domain; it reads RVGGPADWLF…TKAVFEAPRG (164 aa). Arginine 167 is an active-site residue. Residues 200-213 are compositionally biased toward basic and acidic residues; the sequence is LARRDATQPTKERS. A disordered region spans residues 200 to 230; the sequence is LARRDATQPTKERSAGSTFRNPAGFSSTGRS. Positions 214 to 228 are enriched in polar residues; sequence AGSTFRNPAGFSSTG. Residue serine 216 is the Proton donor of the active site. Glutamate 298 is a catalytic residue.

It belongs to the MurB family. Requires FAD as cofactor.

The protein localises to the cytoplasm. The catalysed reaction is UDP-N-acetyl-alpha-D-muramate + NADP(+) = UDP-N-acetyl-3-O-(1-carboxyvinyl)-alpha-D-glucosamine + NADPH + H(+). It participates in cell wall biogenesis; peptidoglycan biosynthesis. Functionally, cell wall formation. The sequence is that of UDP-N-acetylenolpyruvoylglucosamine reductase from Roseobacter denitrificans (strain ATCC 33942 / OCh 114) (Erythrobacter sp. (strain OCh 114)).